A 232-amino-acid chain; its full sequence is Octanoyltransferase (232 aa).

The BPL/LPL catalytic domain occupies 44-219; the sequence is EYTADEIWVV…QLARQFGLVL (176 aa). Substrate is bound by residues 83–90, 150–152, and 163–165; these read RGGQVTYH, ALG, and GLS. The active-site Acyl-thioester intermediate is cysteine 181.

This sequence belongs to the LipB family.

The protein resides in the cytoplasm. It catalyses the reaction octanoyl-[ACP] + L-lysyl-[protein] = N(6)-octanoyl-L-lysyl-[protein] + holo-[ACP] + H(+). It participates in protein modification; protein lipoylation via endogenous pathway; protein N(6)-(lipoyl)lysine from octanoyl-[acyl-carrier-protein]: step 1/2. In terms of biological role, catalyzes the transfer of endogenously produced octanoic acid from octanoyl-acyl-carrier-protein onto the lipoyl domains of lipoate-dependent enzymes. Lipoyl-ACP can also act as a substrate although octanoyl-ACP is likely to be the physiological substrate. The chain is Octanoyltransferase from Xanthomonas axonopodis pv. citri (strain 306).